A 130-amino-acid chain; its full sequence is Protein Wnt-9 (130 aa).

S1 carries the O-palmitoleoyl serine; by PORCN lipid modification. Residues 41–69 (AGERTIARSRRRPREQRGQRRPKVSDGAL) form a disordered region. Positions 47–62 (ARSRRRPREQRGQRRP) are enriched in basic residues. N97 is a glycosylation site (N-linked (GlcNAc...) asparagine). A disulfide bond links C100 and C111.

The protein belongs to the Wnt family. Post-translationally, palmitoleoylation is required for efficient binding to frizzled receptors. Depalmitoleoylation leads to Wnt signaling pathway inhibition.

Its subcellular location is the secreted. The protein localises to the extracellular space. The protein resides in the extracellular matrix. Ligand for members of the frizzled family of seven transmembrane receptors. Probable developmental protein. May be a signaling molecule which affects the development of discrete regions of tissues. Is likely to signal over only few cell diameters. The protein is Protein Wnt-9 (WNT-9) of Eptatretus stoutii (Pacific hagfish).